The following is a 790-amino-acid chain: LMBR1 domain-containing protein 2 homolog B (790 aa).

The segment covering 1–21 (MSSNTTTPTPTSTPTPTSSPS) has biased composition (low complexity). The segment at 1–22 (MSSNTTTPTPTSTPTPTSSPSI) is disordered. The next 5 helical transmembrane spans lie at 34–54 (FGNL…VLIG), 66–86 (IYAT…AYLV), 128–148 (FLYF…QSFS), 167–187 (VILY…ILSV), and 195–215 (FLSF…TITM). Residues 236-266 (LRNYRVEAVVLKTELEDVKRQLIDHLKLIKT) adopt a coiled-coil conformation. 3 consecutive transmembrane segments (helical) span residues 401 to 421 (FIIA…SEIV), 442 to 462 (PGIG…VCSY), and 539 to 559 (FTLF…FNLH). Disordered stretches follow at residues 630-665 (SQLD…PKLS), 701-751 (LGEK…TKDK), and 765-790 (SFQD…KNKK). The segment covering 644–665 (IDSSNRYKPTPTKTSINIPKLS) has biased composition (polar residues). Low complexity predominate over residues 706 to 734 (NASNNNNNNNNNNNNNNSNNKNSNNNNNS). Residues 735–746 (ILTSNYESYSTP) are compositionally biased toward polar residues. Residues 766 to 778 (FQDDDDHTFDDIE) show a composition bias toward acidic residues.

Belongs to the LIMR family.

The protein localises to the membrane. The polypeptide is LMBR1 domain-containing protein 2 homolog B (Dictyostelium discoideum (Social amoeba)).